A 203-amino-acid polypeptide reads, in one-letter code: GTP cyclohydrolase-2 (203 aa).

Residue R49–E53 participates in GTP binding. C54, C65, and C67 together coordinate Zn(2+). GTP is bound by residues Q70, E92–R94, and T114. The active-site Proton acceptor is the D126. R128 functions as the Nucleophile in the catalytic mechanism. The GTP site is built by T149 and K154.

The protein belongs to the GTP cyclohydrolase II family. Requires Zn(2+) as cofactor.

The enzyme catalyses GTP + 4 H2O = 2,5-diamino-6-hydroxy-4-(5-phosphoribosylamino)-pyrimidine + formate + 2 phosphate + 3 H(+). Its pathway is cofactor biosynthesis; riboflavin biosynthesis; 5-amino-6-(D-ribitylamino)uracil from GTP: step 1/4. Catalyzes the conversion of GTP to 2,5-diamino-6-ribosylamino-4(3H)-pyrimidinone 5'-phosphate (DARP), formate and pyrophosphate. In Shewanella sp. (strain ANA-3), this protein is GTP cyclohydrolase-2.